A 679-amino-acid chain; its full sequence is Glycine--tRNA ligase beta subunit (679 aa).

It belongs to the class-II aminoacyl-tRNA synthetase family. As to quaternary structure, tetramer of two alpha and two beta subunits.

It is found in the cytoplasm. It catalyses the reaction tRNA(Gly) + glycine + ATP = glycyl-tRNA(Gly) + AMP + diphosphate. This is Glycine--tRNA ligase beta subunit from Streptococcus equi subsp. zooepidemicus (strain H70).